The sequence spans 154 residues: Transcription antitermination protein NusB (154 aa).

This sequence belongs to the NusB family.

In terms of biological role, involved in transcription antitermination. Required for transcription of ribosomal RNA (rRNA) genes. Binds specifically to the boxA antiterminator sequence of the ribosomal RNA (rrn) operons. This is Transcription antitermination protein NusB from Rickettsia typhi (strain ATCC VR-144 / Wilmington).